We begin with the raw amino-acid sequence, 222 residues long: Large ribosomal subunit protein bL25 (222 aa).

Belongs to the bacterial ribosomal protein bL25 family. CTC subfamily. As to quaternary structure, part of the 50S ribosomal subunit; part of the 5S rRNA/L5/L18/L25 subcomplex. Contacts the 5S rRNA. Binds to the 5S rRNA independently of L5 and L18.

In terms of biological role, this is one of the proteins that binds to the 5S RNA in the ribosome where it forms part of the central protuberance. The chain is Large ribosomal subunit protein bL25 from Ruthia magnifica subsp. Calyptogena magnifica.